The primary structure comprises 537 residues: 5,6-dihydroxyindole-2-carboxylic acid oxidase (537 aa).

Residues 1-24 (MKSYNVLPLAYISLFLMLFYQVWA) form the signal peptide. Residues 25 to 477 (QFPRECANIE…WPGQEFTVSE (453 aa)) are Lumenal, melanosome-facing. 5 disulfide bridges follow: Cys-30/Cys-41, Cys-42/Cys-65, Cys-56/Cys-99, Cys-101/Cys-110, and Cys-113/Cys-122. N-linked (GlcNAc...) asparagine glycosylation is found at Asn-96 and Asn-104. A glycan (N-linked (GlcNAc...) asparagine) is linked at Asn-181. Zn(2+)-binding residues include His-192, His-215, and His-224. 2 disulfide bridges follow: Cys-258-Cys-261 and Cys-290-Cys-303. 2 N-linked (GlcNAc...) asparagine glycosylation sites follow: Asn-304 and Asn-350. The Zn(2+) site is built by His-377 and His-381. A glycan (N-linked (GlcNAc...) asparagine) is linked at Asn-385. His-404 lines the Zn(2+) pocket. The chain crosses the membrane as a helical span at residues 478–501 (IITIAVVAALLLVAAIFGVASCLI). The Cytoplasmic segment spans residues 502–537 (RSRSTKNEANQPLLTDHYQRYAEDYEELPNPNHSMV).

It belongs to the tyrosinase family. As to quaternary structure, monomer. Interacts with ATP7A. Interacts with SLC45A2. The cofactor is Cu(2+). It depends on Zn(2+) as a cofactor. Post-translationally, glycosylated. Pigment cells.

The protein resides in the melanosome membrane. The catalysed reaction is 2 5,6-dihydroxyindole-2-carboxylate + O2 = 2 indole-5,6-quinone-2-carboxylate + 2 H2O. Its pathway is pigment biosynthesis; melanin biosynthesis. Functionally, plays a role in melanin biosynthesis. Catalyzes the oxidation of 5,6-dihydroxyindole-2-carboxylic acid (DHICA) into indole-5,6-quinone-2-carboxylic acid. May regulate or influence the type of melanin synthesized. Also to a lower extent, capable of hydroxylating tyrosine and producing melanin. The chain is 5,6-dihydroxyindole-2-carboxylic acid oxidase (Tyrp1) from Mus musculus (Mouse).